The following is a 333-amino-acid chain: Holliday junction branch migration complex subunit RuvB (333 aa).

The tract at residues M1–Y181 is large ATPase domain (RuvB-L). ATP contacts are provided by residues L20, R21, G62, K65, T66, T67, E128–F130, R171, Y181, and R218. T66 contacts Mg(2+). The interval Q182–D252 is small ATPAse domain (RuvB-S). The interval A255 to D333 is head domain (RuvB-H). DNA-binding residues include R291, R310, and R315.

The protein belongs to the RuvB family. As to quaternary structure, homohexamer. Forms an RuvA(8)-RuvB(12)-Holliday junction (HJ) complex. HJ DNA is sandwiched between 2 RuvA tetramers; dsDNA enters through RuvA and exits via RuvB. An RuvB hexamer assembles on each DNA strand where it exits the tetramer. Each RuvB hexamer is contacted by two RuvA subunits (via domain III) on 2 adjacent RuvB subunits; this complex drives branch migration. In the full resolvosome a probable DNA-RuvA(4)-RuvB(12)-RuvC(2) complex forms which resolves the HJ.

Its subcellular location is the cytoplasm. The enzyme catalyses ATP + H2O = ADP + phosphate + H(+). In terms of biological role, the RuvA-RuvB-RuvC complex processes Holliday junction (HJ) DNA during genetic recombination and DNA repair, while the RuvA-RuvB complex plays an important role in the rescue of blocked DNA replication forks via replication fork reversal (RFR). RuvA specifically binds to HJ cruciform DNA, conferring on it an open structure. The RuvB hexamer acts as an ATP-dependent pump, pulling dsDNA into and through the RuvAB complex. RuvB forms 2 homohexamers on either side of HJ DNA bound by 1 or 2 RuvA tetramers; 4 subunits per hexamer contact DNA at a time. Coordinated motions by a converter formed by DNA-disengaged RuvB subunits stimulates ATP hydrolysis and nucleotide exchange. Immobilization of the converter enables RuvB to convert the ATP-contained energy into a lever motion, pulling 2 nucleotides of DNA out of the RuvA tetramer per ATP hydrolyzed, thus driving DNA branch migration. The RuvB motors rotate together with the DNA substrate, which together with the progressing nucleotide cycle form the mechanistic basis for DNA recombination by continuous HJ branch migration. Branch migration allows RuvC to scan DNA until it finds its consensus sequence, where it cleaves and resolves cruciform DNA. The protein is Holliday junction branch migration complex subunit RuvB of Lactococcus lactis subsp. lactis (strain IL1403) (Streptococcus lactis).